The chain runs to 199 residues: Transgelin-2 (199 aa).

Position 2 is an N-acetylalanine (Ala2). At Ser11 the chain carries Phosphoserine. An N6-acetyllysine mark is found at Lys17 and Lys20. A Calponin-homology (CH) domain is found at 24 to 136 (ADLEQILIQW…RTLMNLGGLA (113 aa)). Ser163 bears the Phosphoserine mark. A Glycyl lysine isopeptide (Lys-Gly) (interchain with G-Cter in SUMO2) cross-link involves residue Lys171. One copy of the Calponin-like repeat lies at 174–199 (IGLQMGTNRGASQAGMTGYGMPRQIL). At Thr180 the chain carries Phosphothreonine. Arg182 and Arg196 each carry omega-N-methylarginine.

Belongs to the calponin family.

This Mus musculus (Mouse) protein is Transgelin-2 (Tagln2).